The primary structure comprises 284 residues: Cell division protein DivIB (284 aa).

Basic and acidic residues predominate over residues 1–10 (MAWLRKKEQQ). The disordered stretch occupies residues 1–38 (MAWLRKKEQQSDPLTPWQQYQARQQQTPRHDRRQKPKL). Topologically, residues 1 to 56 (MAWLRKKEQQSDPLTPWQQYQARQQQTPRHDRRQKPKLDVNLPKIQTLRRRKLVKN) are cytoplasmic. Residues 57–77 (LVLILLPLLLLLGVFGYFASP) traverse the membrane as a helical segment. Residues 78–284 (LSKVGLVSVQ…YSSSEKSSND (207 aa)) lie on the Extracellular side of the membrane. Positions 79–150 (SKVGLVSVQG…NRIIIKTSEY (72 aa)) constitute a POTRA domain.

The protein belongs to the FtsQ/DivIB family. DivIB subfamily.

The protein resides in the cell membrane. Functionally, cell division protein that may be involved in stabilizing or promoting the assembly of the division complex. This Lacticaseibacillus rhamnosus (strain ATCC 53103 / LMG 18243 / GG) (Lactobacillus rhamnosus) protein is Cell division protein DivIB.